A 438-amino-acid chain; its full sequence is tRNA modification GTPase MnmE (438 aa).

Residues arginine 20, glutamate 76, and lysine 115 each coordinate (6S)-5-formyl-5,6,7,8-tetrahydrofolate. The TrmE-type G domain maps to 210–370 (NFTIMILGRR…LKCFINKIVD (161 aa)). Asparagine 220 contributes to the K(+) binding site. GTP is bound by residues 220–225 (NVGKST), 239–245 (TNIPGTT), and 264–267 (DTAG). A Mg(2+)-binding site is contributed by serine 224. Positions 239, 241, and 244 each coordinate K(+). Mg(2+) is bound at residue threonine 245. Lysine 438 serves as a coordination point for (6S)-5-formyl-5,6,7,8-tetrahydrofolate.

This sequence belongs to the TRAFAC class TrmE-Era-EngA-EngB-Septin-like GTPase superfamily. TrmE GTPase family. In terms of assembly, homodimer. Heterotetramer of two MnmE and two MnmG subunits. The cofactor is K(+).

It is found in the cytoplasm. Exhibits a very high intrinsic GTPase hydrolysis rate. Involved in the addition of a carboxymethylaminomethyl (cmnm) group at the wobble position (U34) of certain tRNAs, forming tRNA-cmnm(5)s(2)U34. In Carsonella ruddii (strain PV), this protein is tRNA modification GTPase MnmE.